A 276-amino-acid chain; its full sequence is 4-hydroxy-3-methylbut-2-enyl diphosphate reductase (276 aa).

C12 contributes to the [4Fe-4S] cluster binding site. The (2E)-4-hydroxy-3-methylbut-2-enyl diphosphate site is built by H36 and H70. Residues H36 and H70 each coordinate dimethylallyl diphosphate. The isopentenyl diphosphate site is built by H36 and H70. C92 contacts [4Fe-4S] cluster. Residue H120 participates in (2E)-4-hydroxy-3-methylbut-2-enyl diphosphate binding. H120 contacts dimethylallyl diphosphate. Residue H120 coordinates isopentenyl diphosphate. E122 serves as the catalytic Proton donor. T158 lines the (2E)-4-hydroxy-3-methylbut-2-enyl diphosphate pocket. [4Fe-4S] cluster is bound at residue C186. Residues S214, S215, N216, and S258 each coordinate (2E)-4-hydroxy-3-methylbut-2-enyl diphosphate. Positions 214, 215, 216, and 258 each coordinate dimethylallyl diphosphate. 4 residues coordinate isopentenyl diphosphate: S214, S215, N216, and S258.

It belongs to the IspH family. It depends on [4Fe-4S] cluster as a cofactor.

The catalysed reaction is isopentenyl diphosphate + 2 oxidized [2Fe-2S]-[ferredoxin] + H2O = (2E)-4-hydroxy-3-methylbut-2-enyl diphosphate + 2 reduced [2Fe-2S]-[ferredoxin] + 2 H(+). It catalyses the reaction dimethylallyl diphosphate + 2 oxidized [2Fe-2S]-[ferredoxin] + H2O = (2E)-4-hydroxy-3-methylbut-2-enyl diphosphate + 2 reduced [2Fe-2S]-[ferredoxin] + 2 H(+). It functions in the pathway isoprenoid biosynthesis; dimethylallyl diphosphate biosynthesis; dimethylallyl diphosphate from (2E)-4-hydroxy-3-methylbutenyl diphosphate: step 1/1. The protein operates within isoprenoid biosynthesis; isopentenyl diphosphate biosynthesis via DXP pathway; isopentenyl diphosphate from 1-deoxy-D-xylulose 5-phosphate: step 6/6. Its function is as follows. Catalyzes the conversion of 1-hydroxy-2-methyl-2-(E)-butenyl 4-diphosphate (HMBPP) into a mixture of isopentenyl diphosphate (IPP) and dimethylallyl diphosphate (DMAPP). Acts in the terminal step of the DOXP/MEP pathway for isoprenoid precursor biosynthesis. In Wolinella succinogenes (strain ATCC 29543 / DSM 1740 / CCUG 13145 / JCM 31913 / LMG 7466 / NCTC 11488 / FDC 602W) (Vibrio succinogenes), this protein is 4-hydroxy-3-methylbut-2-enyl diphosphate reductase.